The sequence spans 452 residues: MQVKETVADGLKREFEVNVPAADIDAQVDARLVDLKDKVKLNGFRPGKVPVSHLKRVYGRSVAAETIDKLVRETNDGIFAERGFRLATEPKITMPQDQKVVEDILAGKSDLNYTVAIEVVPTIELADFKSFSVEKPVVEVSDSDVDDAIKRIAEANRAYADKAEGAKAESGDRVTISFKGSIEGVPFDGGTGEDIPVVIGSNSFIPGFEDQLIGIAVGETRTIKVTFPTNYASETLAGKPAEFETTATKVEAPQDTTIDDEFAKTLGMESLDKLKEAAKARLAAEYAGATRLRVKRQLLDRLDETHKFDAPPSLVEQEFAVMWQSINAEMQQNGKSFADEDTTEEAAREEYRKIADRRVRLGLVLSEIGEKNKIQVTDDEVSRAVIERARQMPGREKEVWDFYRSNAEALAQLRAPIYEDKVVDFILELATVTEKPVTREELYKDDDDKTAA.

One can recognise a PPIase FKBP-type domain in the interval 171 to 256 (GDRVTISFKG…ATKVEAPQDT (86 aa)).

The protein belongs to the FKBP-type PPIase family. Tig subfamily.

The protein resides in the cytoplasm. The catalysed reaction is [protein]-peptidylproline (omega=180) = [protein]-peptidylproline (omega=0). In terms of biological role, involved in protein export. Acts as a chaperone by maintaining the newly synthesized protein in an open conformation. Functions as a peptidyl-prolyl cis-trans isomerase. The polypeptide is Trigger factor (Rhodopseudomonas palustris (strain HaA2)).